A 672-amino-acid chain; its full sequence is Transmembrane 9 superfamily member 2 (672 aa).

A signal peptide spans 1–18 (MKRGVWLLIYCYATLTKG). Topologically, residues 19 to 307 (FSLPGLSPTT…DKYLHIYDPQ (289 aa)) are extracellular. The helical transmembrane segment at 308–328 (IQWFSLINFSVIVILLSSVVM) threads the bilayer. Residues 329 to 383 (HSLLRALKSDLARYNELNLDNEFHEDSGWKLGHGDVFRTPSKSMLLSILVGSGMQ) are Cytoplasmic-facing. The helical transmembrane segment at 384–404 (LFLMVMCSIFFAAVGLVSPVS) threads the bilayer. Topologically, residues 405 to 410 (RGSLPT) are extracellular. A helical membrane pass occupies residues 411–431 (VMFVLYALFGFVGSYASMGVY). The Cytoplasmic segment spans residues 432–447 (KFFRGPYWKANMILTP). The helical transmembrane segment at 448–468 (ILLPGAIFLLIVIMNFFLLFA) threads the bilayer. At 469–479 (HSSGVIPARSL) the chain is on the extracellular side. Residues 480 to 500 (FFIILLWFLVSVPLSFAGSIV) form a helical membrane-spanning segment. At 501–532 (AHKQCNWDEHPTKTNQIARQIPYQPWYLRTAQ) the chain is on the cytoplasmic side. Residues 533-553 (ATLIAGIFSFGSIAVELYFIY) traverse the membrane as a helical segment. Topologically, residues 554–565 (SSLWFNKIFYMF) are extracellular. Residues 566 to 586 (GFLLFSFLLLTLTTSLVTILI) form a helical membrane-spanning segment. Over 587–601 (TYYSLCLENWLWQWR) the chain is Cytoplasmic. Residues 602-622 (SFIIGGLGCSIYTFIHSILFT) form a helical membrane-spanning segment. The Extracellular segment spans residues 623-628 (KFKLGG). A helical transmembrane segment spans residues 629-649 (VITVVLYLGYSLIISALCCVV). Residues 650-672 (TGAIGFFSSMFFIRKIYSAIKVE) lie on the Cytoplasmic side of the membrane.

It belongs to the nonaspanin (TM9SF) (TC 9.A.2) family.

It localises to the vacuole membrane. Functionally, with EMP70 and TMN3, plays a critical role in the late stages of a nutrient-controlled pathway notably regulating FLO11 gene expression. Acts downstream of RAS2 and TOR. Essential for cell adhesion and filamentous growth. May play a role as effector of cellular copper homeostasis. The polypeptide is Transmembrane 9 superfamily member 2 (TMN2) (Saccharomyces cerevisiae (strain ATCC 204508 / S288c) (Baker's yeast)).